The chain runs to 521 residues: NADH-quinone oxidoreductase subunit N (521 aa).

14 consecutive transmembrane segments (helical) span residues leucine 15–leucine 35, isoleucine 43–methionine 63, leucine 98–threonine 118, alanine 128–glycine 148, leucine 150–leucine 170, valine 185–valine 205, alanine 227–alanine 247, proline 261–phenylalanine 281, valine 303–leucine 323, leucine 331–valine 351, valine 363–isoleucine 383, alanine 406–phenylalanine 426, tryptophan 442–isoleucine 462, and threonine 485–methionine 505.

Belongs to the complex I subunit 2 family. NDH-1 is composed of 14 different subunits. Subunits NuoA, H, J, K, L, M, N constitute the membrane sector of the complex.

It localises to the cell membrane. It catalyses the reaction a quinone + NADH + 5 H(+)(in) = a quinol + NAD(+) + 4 H(+)(out). Functionally, NDH-1 shuttles electrons from NADH, via FMN and iron-sulfur (Fe-S) centers, to quinones in the respiratory chain. The immediate electron acceptor for the enzyme in this species is believed to be a menaquinone. Couples the redox reaction to proton translocation (for every two electrons transferred, four hydrogen ions are translocated across the cytoplasmic membrane), and thus conserves the redox energy in a proton gradient. The sequence is that of NADH-quinone oxidoreductase subunit N from Paenibacillus sp. (strain JDR-2).